A 154-amino-acid polypeptide reads, in one-letter code: Transcriptional repressor NrdR (154 aa).

A zinc finger lies at 3–34 (CPFCNAPDTKVIDSRLATEGAQVRRRRECMSC). An ATP-cone domain is found at 49–139 (PRVIKSDGNR…VYRSFQDVNA (91 aa)).

Belongs to the NrdR family. Zn(2+) serves as cofactor.

Negatively regulates transcription of bacterial ribonucleotide reductase nrd genes and operons by binding to NrdR-boxes. The sequence is that of Transcriptional repressor NrdR from Hydrogenovibrio crunogenus (strain DSM 25203 / XCL-2) (Thiomicrospira crunogena).